The sequence spans 197 residues: Thymidine kinase (197 aa).

ATP is bound by residues 9 to 16 and 87 to 90; these read SAMDAGKT and DEIH. Catalysis depends on Glu88, which acts as the Proton acceptor. Cys145, Cys147, Cys187, and His190 together coordinate Zn(2+).

Belongs to the thymidine kinase family. Homotetramer.

The protein localises to the cytoplasm. It catalyses the reaction thymidine + ATP = dTMP + ADP + H(+). The protein is Thymidine kinase of Francisella tularensis subsp. tularensis (strain SCHU S4 / Schu 4).